Consider the following 398-residue polypeptide: Acetate kinase (398 aa).

Mg(2+) is bound at residue Asn-8. Lys-15 contributes to the ATP binding site. Arg-89 provides a ligand contact to substrate. Catalysis depends on Asp-146, which acts as the Proton donor/acceptor. ATP-binding positions include 206–210, 283–285, and 331–335; these read HIGNG, DMR, and GMGEN. Glu-383 is a Mg(2+) binding site.

This sequence belongs to the acetokinase family. As to quaternary structure, homodimer. It depends on Mg(2+) as a cofactor. Mn(2+) serves as cofactor.

Its subcellular location is the cytoplasm. It catalyses the reaction acetate + ATP = acetyl phosphate + ADP. Its pathway is metabolic intermediate biosynthesis; acetyl-CoA biosynthesis; acetyl-CoA from acetate: step 1/2. Functionally, catalyzes the formation of acetyl phosphate from acetate and ATP. Can also catalyze the reverse reaction. This Streptococcus pyogenes serotype M2 (strain MGAS10270) protein is Acetate kinase.